Consider the following 479-residue polypeptide: tRNA modification GTPase MnmE (479 aa).

Residues R30, E91, and K130 each coordinate (6S)-5-formyl-5,6,7,8-tetrahydrofolate. In terms of domain architecture, TrmE-type G spans 226–402 (GFRIVLTGLP…VLKDLVKEFA (177 aa)). N236 contributes to the K(+) binding site. GTP contacts are provided by residues 236–241 (NVGKSS), 255–261 (TDIPGTT), and 280–283 (DTAG). Residue S240 participates in Mg(2+) binding. 3 residues coordinate K(+): T255, I257, and T260. T261 provides a ligand contact to Mg(2+). K479 provides a ligand contact to (6S)-5-formyl-5,6,7,8-tetrahydrofolate.

The protein belongs to the TRAFAC class TrmE-Era-EngA-EngB-Septin-like GTPase superfamily. TrmE GTPase family. In terms of assembly, homodimer. Heterotetramer of two MnmE and two MnmG subunits. The cofactor is K(+).

The protein localises to the cytoplasm. In terms of biological role, exhibits a very high intrinsic GTPase hydrolysis rate. Involved in the addition of a carboxymethylaminomethyl (cmnm) group at the wobble position (U34) of certain tRNAs, forming tRNA-cmnm(5)s(2)U34. The protein is tRNA modification GTPase MnmE of Bdellovibrio bacteriovorus (strain ATCC 15356 / DSM 50701 / NCIMB 9529 / HD100).